We begin with the raw amino-acid sequence, 183 residues long: Holliday junction branch migration complex subunit RuvA (183 aa).

The domain I stretch occupies residues 1 to 64 (MVVGIEGIIT…EDSNKFYGFL (64 aa)). The interval 65 to 139 (DKDEQKMFEM…DTRTKLENVS (75 aa)) is domain II. Position 139 (S139) is a region of interest, flexible linker. A domain III region spans residues 139–183 (SDDKSEALAALLTLGFKQEKIISVLASAQATGTSELIKEALKKLR).

The protein belongs to the RuvA family. In terms of assembly, homotetramer. Forms an RuvA(8)-RuvB(12)-Holliday junction (HJ) complex. HJ DNA is sandwiched between 2 RuvA tetramers; dsDNA enters through RuvA and exits via RuvB. An RuvB hexamer assembles on each DNA strand where it exits the tetramer. Each RuvB hexamer is contacted by two RuvA subunits (via domain III) on 2 adjacent RuvB subunits; this complex drives branch migration. In the full resolvosome a probable DNA-RuvA(4)-RuvB(12)-RuvC(2) complex forms which resolves the HJ.

The protein resides in the cytoplasm. Functionally, the RuvA-RuvB-RuvC complex processes Holliday junction (HJ) DNA during genetic recombination and DNA repair, while the RuvA-RuvB complex plays an important role in the rescue of blocked DNA replication forks via replication fork reversal (RFR). RuvA specifically binds to HJ cruciform DNA, conferring on it an open structure. The RuvB hexamer acts as an ATP-dependent pump, pulling dsDNA into and through the RuvAB complex. HJ branch migration allows RuvC to scan DNA until it finds its consensus sequence, where it cleaves and resolves the cruciform DNA. In Campylobacter jejuni subsp. doylei (strain ATCC BAA-1458 / RM4099 / 269.97), this protein is Holliday junction branch migration complex subunit RuvA.